The sequence spans 162 residues: Interleukin-15 (162 aa).

The signal sequence occupies residues 1–29 (MRISKPHLRITSIQCYVCLLLNTHFLTEA). The propeptide occupies 30–48 (GIRVFILGCISAGIPKTEA). Cystine bridges form between C83-C133 and C90-C136. N-linked (GlcNAc...) asparagine glycosylation is found at N119, N127, and N143.

Belongs to the IL-15/IL-21 family.

Its subcellular location is the secreted. Cytokine that plays a major role in the development of inflammatory and protective immune responses to microbial invaders and parasites by modulating immune cells of both the innate and adaptive immune systems. Stimulates the proliferation of natural killer cells, T-cells and B-cells and promotes the secretion of several cytokines. In monocytes, induces the production of IL8 and monocyte chemotactic protein 1/CCL2, two chemokines that attract neutrophils and monocytes respectively to sites of infection. Unlike most cytokines, which are secreted in soluble form, IL15 is expressed in association with its high affinity IL15RA on the surface of IL15-producing cells and delivers signals to target cells that express IL2RB and IL2RG receptor subunits. Binding to its receptor triggers the phosphorylation of JAK1 and JAK3 and the recruitment and subsequent phosphorylation of signal transducer and activator of transcription-3/STAT3 and STAT5. In mast cells, induces the rapid tyrosine phosphorylation of STAT6 and thereby controls mast cell survival and release of cytokines such as IL4. In Marmota himalayana (Himalayan marmot), this protein is Interleukin-15 (IL15).